We begin with the raw amino-acid sequence, 698 residues long: Protein arginine N-methyltransferase 7 (698 aa).

2 consecutive SAM-dependent MTase PRMT-type domains span residues 14 to 357 and 366 to 698; these read QNTW…YSLW and EKPA…EKSE.

It belongs to the class I-like SAM-binding methyltransferase superfamily. Protein arginine N-methyltransferase family. PRMT7 subfamily.

Functionally, essential arginine methyltransferase that can both catalyze the formation of omega-N monomethylarginine (MMA) and symmetrical dimethylarginine (sDMA). Specifically mediates the symmetrical dimethylation of arginine residues in the small nuclear ribonucleoproteins SmD1 and SmD3. This Drosophila mojavensis (Fruit fly) protein is Protein arginine N-methyltransferase 7 (Art7).